The primary structure comprises 402 residues: Digeranylgeranylglycerophospholipid reductase (402 aa).

FAD contacts are provided by Gly-15, Glu-34, Cys-45, Ala-46, Gly-48, Arg-99, Ala-123, Asp-280, Gly-292, and Ile-293.

It belongs to the geranylgeranyl reductase family. DGGGPL reductase subfamily. It depends on FAD as a cofactor.

It catalyses the reaction a 2,3-bis-O-phytanyl-sn-glycerol 1-phospholipid + 8 oxidized 2[4Fe-4S]-[ferredoxin] = a 2,3-bis-O-(geranylgeranyl)-sn-glycerol 1-phospholipid + 8 reduced 2[4Fe-4S]-[ferredoxin] + 16 H(+). It carries out the reaction 2,3-bis-O-(phytanyl)-sn-glycerol 1-phosphate + 8 oxidized 2[4Fe-4S]-[ferredoxin] = 2,3-bis-O-(geranylgeranyl)-sn-glycerol 1-phosphate + 8 reduced 2[4Fe-4S]-[ferredoxin] + 16 H(+). The enzyme catalyses a 2,3-bis-O-phytanyl-sn-glycerol 1-phospholipid + 8 A = a 2,3-bis-O-(geranylgeranyl)-sn-glycerol 1-phospholipid + 8 AH2. The catalysed reaction is CDP-2,3-bis-O-(geranylgeranyl)-sn-glycerol + 8 AH2 = CDP-2,3-bis-O-(phytanyl)-sn-glycerol + 8 A. It catalyses the reaction archaetidylserine + 8 AH2 = 2,3-bis-O-phytanyl-sn-glycero-3-phospho-L-serine + 8 A. It participates in membrane lipid metabolism; glycerophospholipid metabolism. In terms of biological role, is involved in the reduction of 2,3-digeranylgeranylglycerophospholipids (unsaturated archaeols) into 2,3-diphytanylglycerophospholipids (saturated archaeols) in the biosynthesis of archaeal membrane lipids. Catalyzes the formation of archaetidic acid (2,3-di-O-phytanyl-sn-glyceryl phosphate) from 2,3-di-O-geranylgeranylglyceryl phosphate (DGGGP) via the hydrogenation of each double bond of the isoprenoid chains. Is also probably able to reduce double bonds of geranyl groups in CDP-2,3-bis-O-(geranylgeranyl)-sn-glycerol and archaetidylserine, thus acting at various stages in the biosynthesis of archaeal membrane lipids. This Methanospirillum hungatei JF-1 (strain ATCC 27890 / DSM 864 / NBRC 100397 / JF-1) protein is Digeranylgeranylglycerophospholipid reductase.